Reading from the N-terminus, the 217-residue chain is Cytidylate kinase (217 aa).

21–29 (GPAASGKGT) contributes to the ATP binding site.

It belongs to the cytidylate kinase family. Type 1 subfamily.

It is found in the cytoplasm. The catalysed reaction is CMP + ATP = CDP + ADP. The enzyme catalyses dCMP + ATP = dCDP + ADP. This Rickettsia bellii (strain OSU 85-389) protein is Cytidylate kinase.